A 1114-amino-acid polypeptide reads, in one-letter code: Kinesin-like protein KIN-12B (1114 aa).

The tract at residues 1-119 (MRSLFSSKLS…GGGGGDSGVQ (119 aa)) is disordered. Residues 98 to 107 (SAASPAPEGA) are compositionally biased toward low complexity. Residues 117 to 459 (GVQVVVRVRP…LRFAHRAKDI (343 aa)) form the Kinesin motor domain. 197 to 204 (GQTGSGKT) is an ATP binding site. Coiled-coil stretches lie at residues 772–810 (VLSAKIELERIQEELERYRNFKDEKEVLLEEIQHLKNQL) and 999–1043 (ELLV…DQEV). The segment covering 1055-1065 (LPSNVVQSPEP) has biased composition (polar residues). The disordered stretch occupies residues 1055-1081 (LPSNVVQSPEPSETGPARYDTGGSFGD).

This sequence belongs to the TRAFAC class myosin-kinesin ATPase superfamily. Kinesin family. KIN-12 subfamily.

This chain is Kinesin-like protein KIN-12B, found in Oryza sativa subsp. japonica (Rice).